The sequence spans 560 residues: Eukaryotic translation initiation factor 3 subunit D-1 (560 aa).

Positions 98 to 166 (VQKPPHQRGR…RGPPPKMRES (69 aa)) are disordered. The span at 100-121 (KPPHQRGRFRNMRNSRSGRGRN) shows a compositional bias: basic residues. Threonine 128 is modified (phosphothreonine). Over residues 147–156 (GRGMGKKFGH) the composition is skewed to basic residues. The tract at residues 291–305 (EFDLLTVNESSVEPP) is RNA gate.

Belongs to the eIF-3 subunit D family. As to quaternary structure, component of the eukaryotic translation initiation factor 3 (eIF-3) complex. The eIF-3 complex interacts with pix.

The protein localises to the cytoplasm. In terms of biological role, mRNA cap-binding component of the eukaryotic translation initiation factor 3 (eIF-3) complex, which is involved in protein synthesis of a specialized repertoire of mRNAs and, together with other initiation factors, stimulates binding of mRNA and methionyl-tRNAi to the 40S ribosome. The eIF-3 complex specifically targets and initiates translation of a subset of mRNAs involved in cell proliferation. In the eIF-3 complex, eif3d specifically recognizes and binds the 7-methylguanosine cap of a subset of mRNAs. The chain is Eukaryotic translation initiation factor 3 subunit D-1 from Drosophila simulans (Fruit fly).